The sequence spans 261 residues: Indole-3-glycerol phosphate synthase (261 aa).

Belongs to the TrpC family.

The catalysed reaction is 1-(2-carboxyphenylamino)-1-deoxy-D-ribulose 5-phosphate + H(+) = (1S,2R)-1-C-(indol-3-yl)glycerol 3-phosphate + CO2 + H2O. The protein operates within amino-acid biosynthesis; L-tryptophan biosynthesis; L-tryptophan from chorismate: step 4/5. The chain is Indole-3-glycerol phosphate synthase from Burkholderia pseudomallei (strain 1106a).